The primary structure comprises 226 residues: Cytidylate kinase (226 aa).

10–18 is a binding site for ATP; it reads GPASSGKST.

Belongs to the cytidylate kinase family. Type 1 subfamily.

The protein localises to the cytoplasm. It carries out the reaction CMP + ATP = CDP + ADP. The catalysed reaction is dCMP + ATP = dCDP + ADP. The chain is Cytidylate kinase from Streptococcus equi subsp. zooepidemicus (strain MGCS10565).